The following is a 723-amino-acid chain: Peroxisomal bifunctional enzyme (723 aa).

The segment at 1-282 (MAEYTRLHNA…FAERKANKWS (282 aa)) is enoyl-CoA hydratase / isomerase. Lys-38 bears the N6-succinyllysine mark. Residue Gly-101 coordinates substrate. At Lys-165 the chain carries N6-acetyllysine; alternate. Lys-165 is subject to N6-succinyllysine; alternate. Position 171 is an N6-acetyllysine (Lys-171). Lys-219 bears the N6-acetyllysine; alternate mark. N6-succinyllysine; alternate is present on Lys-219. Lys-250 carries the post-translational modification N6-acetyllysine. N6-succinyllysine occurs at positions 280 and 290. The 3-hydroxyacyl-CoA dehydrogenase stretch occupies residues 283–572 (TPSGASWKTA…DVLCELGRFG (290 aa)). Residues Lys-346, Lys-350, and Lys-464 each carry the N6-acetyllysine modification. Lys-532 carries the post-translational modification N6-succinyllysine. Phosphothreonine is present on Thr-548. Lys-577 bears the N6-succinyllysine mark. N6-acetyllysine; alternate is present on residues Lys-584, Lys-591, and Lys-710. N6-succinyllysine; alternate is present on residues Lys-584, Lys-591, and Lys-710. Residue Ser-718 is modified to Phosphoserine. A Microbody targeting signal motif is present at residues 721-723 (SKL). Lys-722 carries the N6-succinyllysine modification.

It in the N-terminal section; belongs to the enoyl-CoA hydratase/isomerase family. In the C-terminal section; belongs to the 3-hydroxyacyl-CoA dehydrogenase family. Monomer. Acetylated, leading to enhanced enzyme activity. Acetylation is enhanced by up to 80% after treatment either with trichostin A (TSA) or with nicotinamide (NAM) with highest increase on Lys-346. Acetylation and enzyme activity increased by about 1.5% on addition of fatty acids. As to expression, liver and kidney. Strongly expressed in the terminal segments of the proximal tubule. Lower amounts seen in the brain.

Its subcellular location is the peroxisome. The enzyme catalyses a (3S)-3-hydroxyacyl-CoA = a (2E)-enoyl-CoA + H2O. It carries out the reaction a 4-saturated-(3S)-3-hydroxyacyl-CoA = a (3E)-enoyl-CoA + H2O. The catalysed reaction is a (3Z)-enoyl-CoA = a 4-saturated (2E)-enoyl-CoA. It catalyses the reaction a (3E)-enoyl-CoA = a 4-saturated (2E)-enoyl-CoA. The enzyme catalyses a (3S)-3-hydroxyacyl-CoA + NAD(+) = a 3-oxoacyl-CoA + NADH + H(+). It carries out the reaction (2S,3S)-3-hydroxy-2-methylbutanoyl-CoA = (2E)-2-methylbut-2-enoyl-CoA + H2O. The catalysed reaction is (3S)-hydroxyhexadecanoyl-CoA + NAD(+) = 3-oxohexadecanoyl-CoA + NADH + H(+). It catalyses the reaction (3S)-hydroxyhexadecanoyl-CoA = (2E)-hexadecenoyl-CoA + H2O. The enzyme catalyses (2E)-hexadecenedioyl-CoA + H2O = (3S)-hydroxyhexadecanedioyl-CoA. It carries out the reaction (3S)-hydroxyhexadecanedioyl-CoA + NAD(+) = 3-oxohexadecanedioyl-CoA + NADH + H(+). The catalysed reaction is (3E,5Z)-tetradecadienoyl-CoA = (2E,5Z)-tetradecadienoyl-CoA. It catalyses the reaction (3E,5Z)-octadienoyl-CoA = (2E,5Z)-octadienoyl-CoA. The enzyme catalyses (3S)-hydroxydecanoyl-CoA + NAD(+) = 3-oxodecanoyl-CoA + NADH + H(+). It carries out the reaction (3E)-decenoyl-CoA = (2E)-decenoyl-CoA. The catalysed reaction is (3Z)-hexenoyl-CoA = (2E)-hexenoyl-CoA. It catalyses the reaction (3E)-hexenoyl-CoA = (2E)-hexenoyl-CoA. The enzyme catalyses (3S)-hydroxydecanoyl-CoA = (2E)-decenoyl-CoA + H2O. It carries out the reaction (3S)-hydroxyhexanoyl-CoA = (2E)-hexenoyl-CoA + H2O. Its pathway is lipid metabolism; fatty acid beta-oxidation. Enzyme activity enhanced by acetylation. In terms of biological role, peroxisomal trifunctional enzyme possessing 2-enoyl-CoA hydratase, 3-hydroxyacyl-CoA dehydrogenase, and delta 3, delta 2-enoyl-CoA isomerase activities. Catalyzes two of the four reactions of the long chain fatty acids peroxisomal beta-oxidation pathway. Can also use branched-chain fatty acids such as 2-methyl-2E-butenoyl-CoA as a substrate, which is hydrated into (2S,3S)-3-hydroxy-2-methylbutanoyl-CoA. Optimal isomerase for 2,5 double bonds into 3,5 form isomerization in a range of enoyl-CoA species. Also able to isomerize both 3-cis and 3-trans double bonds into the 2-trans form in a range of enoyl-CoA species. With HSD17B4, catalyzes the hydration of trans-2-enoyl-CoA and the dehydrogenation of 3-hydroxyacyl-CoA, but with opposite chiral specificity. Regulates the amount of medium-chain dicarboxylic fatty acids which are essential regulators of all fatty acid oxidation pathways. Also involved in the degradation of long-chain dicarboxylic acids through peroxisomal beta-oxidation. This is Peroxisomal bifunctional enzyme from Homo sapiens (Human).